We begin with the raw amino-acid sequence, 386 residues long: Trichocyst matrix protein T2-B (386 aa).

The signal sequence occupies residues 1–19 (MKTIILALALIALVSSTQS). A propeptide spanning residues 20 to 48 (DVIDTIKKIDQSPFGRTLFDTIWLELQTG) is cleaved from the precursor. Residues 51-154 (LDRLVSTLTD…AEEHEDFEEK (104 aa)) are a coiled coil. Residues 184 to 238 (KGKAAKQPHKFTKDVANLIQKHFTTSAKKTAKFQHRKGYSKLFKAFATIASKVEQ) constitute a propeptide that is removed on maturation. A coiled-coil region spans residues 294-325 (ALANAISDLAALNDIIAQVEASLDTTVQRIEN).

The protein belongs to the TMP family.

The protein localises to the trichocyst. Its function is as follows. Structural protein that crystallize inside the trichocyst matrix. In Paramecium tetraurelia, this protein is Trichocyst matrix protein T2-B (T2B).